We begin with the raw amino-acid sequence, 1101 residues long: Rho guanine nucleotide exchange factor gef2 (1101 aa).

Residues 203–222 (EDSRKKTSSPSPSFASSKDA) are disordered. Low complexity predominate over residues 210-219 (SSPSPSFASS). Residues 230–428 (KKKSLLIEMM…KNIAEMPTVD (199 aa)) enclose the DH domain. 2 positions are modified to phosphoserine: Ser-736 and Ser-977.

The protein localises to the cytoplasm. The protein resides in the cytoskeleton. Its subcellular location is the microtubule organizing center. It is found in the spindle pole body. In terms of biological role, has a role in the control of cell polarity and cytokinesis. Involved in bipolar growth and septum formation. The protein is Rho guanine nucleotide exchange factor gef2 (gef2) of Schizosaccharomyces pombe (strain 972 / ATCC 24843) (Fission yeast).